The sequence spans 330 residues: D-lactate dehydrogenase (330 aa).

NAD(+) is bound by residues 155-156 (RI), aspartate 175, 206-207 (MP), asparagine 212, 233-235 (MAR), and aspartate 259. The active site involves arginine 235. Glutamate 264 is a catalytic residue. Residue histidine 296 is the Proton donor of the active site.

Belongs to the D-isomer specific 2-hydroxyacid dehydrogenase family.

It catalyses the reaction (R)-lactate + NAD(+) = pyruvate + NADH + H(+). The chain is D-lactate dehydrogenase (ldhD) from Streptococcus agalactiae serotype III (strain NEM316).